The primary structure comprises 431 residues: Glutamate-1-semialdehyde 2,1-aminomutase (431 aa).

K269 bears the N6-(pyridoxal phosphate)lysine mark.

It belongs to the class-III pyridoxal-phosphate-dependent aminotransferase family. HemL subfamily. In terms of assembly, homodimer. The cofactor is pyridoxal 5'-phosphate.

The protein localises to the cytoplasm. It carries out the reaction (S)-4-amino-5-oxopentanoate = 5-aminolevulinate. It functions in the pathway porphyrin-containing compound metabolism; protoporphyrin-IX biosynthesis; 5-aminolevulinate from L-glutamyl-tRNA(Glu): step 2/2. This chain is Glutamate-1-semialdehyde 2,1-aminomutase, found in Francisella tularensis subsp. mediasiatica (strain FSC147).